The chain runs to 242 residues: Leucyl/phenylalanyl-tRNA--protein transferase (242 aa).

This sequence belongs to the L/F-transferase family.

It is found in the cytoplasm. It carries out the reaction N-terminal L-lysyl-[protein] + L-leucyl-tRNA(Leu) = N-terminal L-leucyl-L-lysyl-[protein] + tRNA(Leu) + H(+). The catalysed reaction is N-terminal L-arginyl-[protein] + L-leucyl-tRNA(Leu) = N-terminal L-leucyl-L-arginyl-[protein] + tRNA(Leu) + H(+). The enzyme catalyses L-phenylalanyl-tRNA(Phe) + an N-terminal L-alpha-aminoacyl-[protein] = an N-terminal L-phenylalanyl-L-alpha-aminoacyl-[protein] + tRNA(Phe). In terms of biological role, functions in the N-end rule pathway of protein degradation where it conjugates Leu, Phe and, less efficiently, Met from aminoacyl-tRNAs to the N-termini of proteins containing an N-terminal arginine or lysine. The sequence is that of Leucyl/phenylalanyl-tRNA--protein transferase from Alcanivorax borkumensis (strain ATCC 700651 / DSM 11573 / NCIMB 13689 / SK2).